Here is a 327-residue protein sequence, read N- to C-terminus: Quinone oxidoreductase (327 aa).

The protein belongs to the zinc-containing alcohol dehydrogenase family. Quinone oxidoreductase subfamily. Homodimer.

It carries out the reaction 2 a quinone + NADPH + H(+) = 2 a 1,4-benzosemiquinone + NADP(+). The polypeptide is Quinone oxidoreductase (qor) (Salmonella typhimurium (strain LT2 / SGSC1412 / ATCC 700720)).